Here is a 468-residue protein sequence, read N- to C-terminus: Mitochondrial distribution and morphology protein 10 (468 aa).

Positions 370 to 386 (ERDGLPGIQRDDHDMHH) are enriched in basic and acidic residues. The tract at residues 370-394 (ERDGLPGIQRDDHDMHHHPQRPHAS) is disordered.

This sequence belongs to the MDM10 family. In terms of assembly, component of the ER-mitochondria encounter structure (ERMES) or MDM complex, composed of MMM1, MDM10, MDM12 and MDM34. Associates with the mitochondrial outer membrane sorting assembly machinery SAM(core) complex.

The protein resides in the mitochondrion outer membrane. Its function is as follows. Component of the ERMES/MDM complex, which serves as a molecular tether to connect the endoplasmic reticulum and mitochondria. Components of this complex are involved in the control of mitochondrial shape and protein biogenesis and may function in phospholipid exchange. MDM10 is involved in the late assembly steps of the general translocase of the mitochondrial outer membrane (TOM complex). Functions in the TOM40-specific route of the assembly of outer membrane beta-barrel proteins, including the association of TOM40 with the receptor TOM22 and small TOM proteins. Can associate with the SAM(core) complex as well as the MDM12-MMM1 complex, both involved in late steps of the major beta-barrel assembly pathway, that is responsible for biogenesis of all outer membrane beta-barrel proteins. May act as a switch that shuttles between both complexes and channels precursor proteins into the TOM40-specific pathway. Plays a role in mitochondrial morphology and in the inheritance of mitochondria. This Ajellomyces dermatitidis (strain ER-3 / ATCC MYA-2586) (Blastomyces dermatitidis) protein is Mitochondrial distribution and morphology protein 10.